Here is a 412-residue protein sequence, read N- to C-terminus: Serine--tRNA ligase (412 aa).

An L-serine-binding site is contributed by 228–230 (TAE). Residue 259–261 (RKE) coordinates ATP. E282 serves as a coordination point for L-serine. 346 to 349 (EISS) contacts ATP. Residue S380 coordinates L-serine.

The protein belongs to the class-II aminoacyl-tRNA synthetase family. Type-1 seryl-tRNA synthetase subfamily. In terms of assembly, homodimer. The tRNA molecule binds across the dimer.

The protein localises to the cytoplasm. The enzyme catalyses tRNA(Ser) + L-serine + ATP = L-seryl-tRNA(Ser) + AMP + diphosphate + H(+). It carries out the reaction tRNA(Sec) + L-serine + ATP = L-seryl-tRNA(Sec) + AMP + diphosphate + H(+). The protein operates within aminoacyl-tRNA biosynthesis; selenocysteinyl-tRNA(Sec) biosynthesis; L-seryl-tRNA(Sec) from L-serine and tRNA(Sec): step 1/1. Its function is as follows. Catalyzes the attachment of serine to tRNA(Ser). Is also able to aminoacylate tRNA(Sec) with serine, to form the misacylated tRNA L-seryl-tRNA(Sec), which will be further converted into selenocysteinyl-tRNA(Sec). The polypeptide is Serine--tRNA ligase (Aliarcobacter butzleri (strain RM4018) (Arcobacter butzleri)).